A 330-amino-acid chain; its full sequence is tRNA U34 carboxymethyltransferase (330 aa).

Carboxy-S-adenosyl-L-methionine is bound by residues Lys91, Trp105, Lys110, Gly130, 152–154 (DPS), 181–182 (IE), Met196, Tyr200, and Arg315.

Belongs to the class I-like SAM-binding methyltransferase superfamily. CmoB family. Homotetramer.

The catalysed reaction is carboxy-S-adenosyl-L-methionine + 5-hydroxyuridine(34) in tRNA = 5-carboxymethoxyuridine(34) in tRNA + S-adenosyl-L-homocysteine + H(+). Its function is as follows. Catalyzes carboxymethyl transfer from carboxy-S-adenosyl-L-methionine (Cx-SAM) to 5-hydroxyuridine (ho5U) to form 5-carboxymethoxyuridine (cmo5U) at position 34 in tRNAs. The polypeptide is tRNA U34 carboxymethyltransferase (Shewanella sp. (strain ANA-3)).